Reading from the N-terminus, the 29-residue chain is Cytochrome b6-f complex subunit 8 (29 aa).

Residues 3-23 form a helical membrane-spanning segment; that stretch reads IVSIAWAALMVVFSFSLSLVV.

It belongs to the PetN family. As to quaternary structure, the 4 large subunits of the cytochrome b6-f complex are cytochrome b6, subunit IV (17 kDa polypeptide, PetD), cytochrome f and the Rieske protein, while the 4 small subunits are PetG, PetL, PetM and PetN. The complex functions as a dimer.

It is found in the plastid. Its subcellular location is the chloroplast thylakoid membrane. Its function is as follows. Component of the cytochrome b6-f complex, which mediates electron transfer between photosystem II (PSII) and photosystem I (PSI), cyclic electron flow around PSI, and state transitions. This Phaseolus vulgaris (Kidney bean) protein is Cytochrome b6-f complex subunit 8.